We begin with the raw amino-acid sequence, 89 residues long: Large ribosomal subunit protein bL27 (89 aa).

Residues 1–22 (MAHKKAGGSSRNGRDSAGRRLG) are disordered.

The protein belongs to the bacterial ribosomal protein bL27 family.

The protein is Large ribosomal subunit protein bL27 of Dinoroseobacter shibae (strain DSM 16493 / NCIMB 14021 / DFL 12).